A 294-amino-acid polypeptide reads, in one-letter code: Sarcotoxin II-2 (294 aa).

The N-terminal stretch at 1-22 is a signal peptide; the sequence is MKSFVFFAACFAIVALNSLAHA. Positions 23-24 are cleaved as a propeptide — removed by a dipeptidylpeptidase; the sequence is YP. The residue at position 25 (glutamine 25) is a Pyrrolidone carboxylic acid. Position 293 is an arginine amide (arginine 293).

The protein belongs to the attacin/sarcotoxin-2 family. In terms of tissue distribution, synthesized by the fat body and is eventually secreted into the hemolymph.

It is found in the secreted. Sarcotoxin II is an antibacterial protein which plays a role in the inflammatory response of this insect. The main effect of sarcotoxin II on E.coli may be the inhibition of cell wall synthesis, including septum formation. The protein is Sarcotoxin II-2 of Sarcophaga peregrina (Flesh fly).